The chain runs to 406 residues: Arginine deiminase (406 aa).

C396 acts as the Amidino-cysteine intermediate in catalysis.

Belongs to the arginine deiminase family.

Its subcellular location is the cytoplasm. It catalyses the reaction L-arginine + H2O = L-citrulline + NH4(+). The protein operates within amino-acid degradation; L-arginine degradation via ADI pathway; carbamoyl phosphate from L-arginine: step 1/2. The polypeptide is Arginine deiminase (Aliivibrio fischeri (strain ATCC 700601 / ES114) (Vibrio fischeri)).